Here is a 137-residue protein sequence, read N- to C-terminus: MRDHLPPGLPPDPFADDPCDPSAALDAVEPGQPLDQQERIAVEADLADLAVYEALLAHKGIRGLVVCCDECQQDHYHDWDMLRANLLQLLIDGTVRPHEPAYDPEPDSYVTWDYCRGYADASLNQATSDADGYRRRH.

The tract at residues 1 to 32 (MRDHLPPGLPPDPFADDPCDPSAALDAVEPGQ) is disordered.

It to M.tuberculosis Rv3412.

This is an uncharacterized protein from Mycobacterium leprae (strain TN).